The primary structure comprises 38 residues: Photosystem I reaction center subunit IX (38 aa).

The chain crosses the membrane as a helical span at residues 6 to 26; the sequence is YLSTAPVVATLWLFLTAGILI.

Belongs to the PsaJ family.

Its subcellular location is the plastid. It is found in the chloroplast thylakoid membrane. Its function is as follows. May help in the organization of the PsaE and PsaF subunits. The polypeptide is Photosystem I reaction center subunit IX (Cyanidioschyzon merolae (strain NIES-3377 / 10D) (Unicellular red alga)).